The sequence spans 353 residues: 3-dehydroquinate synthase (353 aa).

Residues 60 to 65 (AGDMNK), 94 to 98 (GMITD), 118 to 119 (TT), K131, and K140 contribute to the NAD(+) site. Zn(2+) is bound by residues E173, H234, and H253.

The protein belongs to the sugar phosphate cyclases superfamily. Dehydroquinate synthase family. It depends on NAD(+) as a cofactor. Co(2+) is required as a cofactor. The cofactor is Zn(2+).

It is found in the cytoplasm. It carries out the reaction 7-phospho-2-dehydro-3-deoxy-D-arabino-heptonate = 3-dehydroquinate + phosphate. It functions in the pathway metabolic intermediate biosynthesis; chorismate biosynthesis; chorismate from D-erythrose 4-phosphate and phosphoenolpyruvate: step 2/7. Catalyzes the conversion of 3-deoxy-D-arabino-heptulosonate 7-phosphate (DAHP) to dehydroquinate (DHQ). The polypeptide is 3-dehydroquinate synthase (Parabacteroides distasonis (strain ATCC 8503 / DSM 20701 / CIP 104284 / JCM 5825 / NCTC 11152)).